Consider the following 234-residue polypeptide: Nitroreductase NfnB (234 aa).

An FMN-binding site is contributed by 25–29; that stretch reads RRAVR. NADP(+) contacts are provided by Ser-55, Arg-105, Tyr-113, and Ile-118. FMN contacts are provided by residues Tyr-137, 181–182, and Arg-223; that span reads AL.

This sequence belongs to the nitroreductase family. In terms of assembly, homodimer. The cofactor is FMN.

Its function is as follows. Confers resistance to antitubercular drugs benzothiazinone (BTZ) and dinitrobenzamide (DNB). Inactivates BTZ and DNB by reducing an essential nitro group of these compounds to amino group or to hydroxyl amine, respectively, using NADH or NADPH as source of reducing equivalents; two electrons are transferred. Able to reduce the nitro group of bicyclic nitroimidazole PA-824, but not of quinone menadione, nitrofurazone, methyl-4-nitrobenzoate, 4-nitrobenzene methyl sulfonate or 4-nitroacetophenone. This Mycolicibacterium smegmatis (strain ATCC 700084 / mc(2)155) (Mycobacterium smegmatis) protein is Nitroreductase NfnB.